A 145-amino-acid chain; its full sequence is Hemoglobin subunit beta (145 aa).

In terms of domain architecture, Globin spans 1–145 (MLTAEEKAAV…VANALAHRYH (145 aa)). Thr-11 carries the phosphothreonine modification. Residue Lys-58 is modified to N6-acetyllysine. His-62 contributes to the heme b binding site. The residue at position 81 (Lys-81) is an N6-acetyllysine. A heme b-binding site is contributed by His-91. Cys-92 is modified (S-nitrosocysteine).

Belongs to the globin family. In terms of assembly, heterotetramer of two alpha chains and two beta chains. As to expression, red blood cells.

In terms of biological role, involved in oxygen transport from the lung to the various peripheral tissues. The sequence is that of Hemoglobin subunit beta (HBB) from Alces alces alces (European moose).